Reading from the N-terminus, the 248-residue chain is Probable transcriptional regulatory protein Mchl_0946 (248 aa).

This sequence belongs to the TACO1 family.

It localises to the cytoplasm. This chain is Probable transcriptional regulatory protein Mchl_0946, found in Methylorubrum extorquens (strain CM4 / NCIMB 13688) (Methylobacterium extorquens).